The primary structure comprises 422 residues: UDP-N-acetyl-D-glucosamine 6-dehydrogenase (422 aa).

NAD(+) is bound by residues Val14, Asp32, Arg37, Thr83, and Thr118. The active-site Nucleophile is the Cys258. Arg329 contributes to the NAD(+) binding site.

It belongs to the UDP-glucose/GDP-mannose dehydrogenase family.

It catalyses the reaction UDP-N-acetyl-alpha-D-glucosamine + 2 NAD(+) + H2O = UDP-2-acetamido-2-deoxy-alpha-D-glucuronate + 2 NADH + 3 H(+). It functions in the pathway bacterial outer membrane biogenesis; LPS O-antigen biosynthesis. Its activity is regulated as follows. Requires either potassium or ammonium-containing salts for activity. Dehydrogenase required for the biosynthesis of the B-band O antigen of serotype O6 lipopolysaccharide. Is also required for flagellin glycosylation. Catalyzes the conversion of UDP-N-acetylglucosamine (UDP-GlcNAc) to UDP-N-acetylglucosaminuronic acid (UDP-GlcNAcA). Can also catalyze the conversion of UDP-N-acetyl-galactosamine (UDP-GalNAc) to UDP-N-acetylgalactosaminuronic acid (UDP-GalNAcA), with low efficiency. Can use NAD(+) or NADP(+), with a preference for NAD(+). This chain is UDP-N-acetyl-D-glucosamine 6-dehydrogenase, found in Pseudomonas aeruginosa.